Reading from the N-terminus, the 62-residue chain is ATP synthase subunit J, mitochondrial (62 aa).

A helical transmembrane segment spans residues isoleucine 13–alanine 32.

F-type ATP synthases have 2 components, the catalytic core F(1) and the membrane-embedded component F(0), linked together by a central stalk and a peripheral stalk. The central stalk, also called rotor shaft, is often seen as part of F(1). The peripheral stalk is seen as part of F(0). F(0) contains the membrane channel next to the rotor. F-type ATP synthases form dimers but each monomer functions independently in ATP generation. The dimer consists of 17 different polypeptides: ATP1 (subunit alpha, 3 molecules per monomer, part of F(1)), ATP2 (subunit beta, 3 copies per monomer, part of F(1)), ATP3 (subunit gamma, part of the central stalk), ATP4 (subunit b, part of the peripheral stalk), ATP5/OSCP (subunit 5/OSCP, part of the peripheral stalk), ATP6 (subunit a, part of the peripheral stalk), ATP7 (subunit d, part of the peripheral stalk), ATP8 (subunit 8, part of the peripheral stalk), OLI1 (subunit c, part of the rotor, 10 molecules per monomer), ATP14 (subunit h, part of the peripheral stalk), ATP15 (subunit epsilon, part of the central stalk), ATP16 (subunit delta, part of the central stalk), ATP17 (subunit f, part of the peripheral stalk), ATP18 (subunit i/j, part of the peripheral stalk), ATP19 (subunit k, dimer-specific, at interface between monomers), ATP20 (subunit g, at interface between monomers), TIM11 (subunit e, at interface between monomers).

The protein resides in the mitochondrion inner membrane. Its function is as follows. Mitochondrial membrane ATP synthase (F(1)F(0) ATP synthase or Complex V) produces ATP from ADP in the presence of a proton gradient across the membrane which is generated by electron transport complexes of the respiratory chain. F-type ATP synthases consist of two structural domains, F(1) - containing the extramembraneous catalytic core, and F(0) - containing the membrane proton channel, linked together by a central stalk and a peripheral stalk. During catalysis, ATP synthesis in the catalytic domain of F(1) is coupled via a rotary mechanism of the central stalk subunits to proton translocation. Part of the complex F(0) domain. Minor subunit located with subunit a/ATP6 in the membrane. This is ATP synthase subunit J, mitochondrial from Yarrowia lipolytica (strain CLIB 122 / E 150) (Yeast).